Reading from the N-terminus, the 339-residue chain is Small ribosomal subunit biogenesis GTPase RsgA (339 aa).

The 161-residue stretch at 111-271 folds into the CP-type G domain; that stretch reads MRGLLKPVAA…LIDSPGIREF (161 aa). GTP is bound by residues 159–162 and 213–221; these read NKAD and GQSGVGKSS. C295, C300, H302, and C308 together coordinate Zn(2+).

This sequence belongs to the TRAFAC class YlqF/YawG GTPase family. RsgA subfamily. As to quaternary structure, monomer. Associates with 30S ribosomal subunit, binds 16S rRNA. Requires Zn(2+) as cofactor.

The protein localises to the cytoplasm. Its function is as follows. One of several proteins that assist in the late maturation steps of the functional core of the 30S ribosomal subunit. Helps release RbfA from mature subunits. May play a role in the assembly of ribosomal proteins into the subunit. Circularly permuted GTPase that catalyzes slow GTP hydrolysis, GTPase activity is stimulated by the 30S ribosomal subunit. This is Small ribosomal subunit biogenesis GTPase RsgA from Pseudomonas aeruginosa (strain ATCC 15692 / DSM 22644 / CIP 104116 / JCM 14847 / LMG 12228 / 1C / PRS 101 / PAO1).